A 213-amino-acid polypeptide reads, in one-letter code: Ribonuclease T (213 aa).

One can recognise an Exonuclease domain in the interval 28-202; sequence VVVDVETGGF…YDTEQTARLF (175 aa). Positions 31, 33, 189, and 194 each coordinate Mg(2+). Catalysis depends on His-189, which acts as the Proton donor/acceptor.

This sequence belongs to the RNase T family. In terms of assembly, homodimer. Mg(2+) is required as a cofactor.

Its function is as follows. Trims short 3' overhangs of a variety of RNA species, leaving a one or two nucleotide 3' overhang. Responsible for the end-turnover of tRNA: specifically removes the terminal AMP residue from uncharged tRNA (tRNA-C-C-A). Also appears to be involved in tRNA biosynthesis. This is Ribonuclease T from Xanthomonas axonopodis pv. citri (strain 306).